The following is a 57-amino-acid chain: Small ribosomal subunit protein bS21 (57 aa).

It belongs to the bacterial ribosomal protein bS21 family.

This chain is Small ribosomal subunit protein bS21, found in Phytoplasma australiense.